Reading from the N-terminus, the 311-residue chain is Cytosolic Fe-S cluster assembly factor Nubp1 homolog (311 aa).

Residues C9, C23, C26, and C32 each coordinate [4Fe-4S] cluster. 63–70 provides a ligand contact to ATP; that stretch reads GKGGVGKS. Residues C240 and C243 each coordinate [4Fe-4S] cluster.

This sequence belongs to the Mrp/NBP35 ATP-binding proteins family. NUBP1/NBP35 subfamily. In terms of assembly, heterotetramer of 2 Nubp1 and 2 Nubp2 chains. [4Fe-4S] cluster serves as cofactor.

Its subcellular location is the cytoplasm. Functionally, component of the cytosolic iron-sulfur (Fe/S) protein assembly (CIA) machinery. Required for maturation of extramitochondrial Fe-S proteins. The Nubp1-Nubp2 heterotetramer forms a Fe-S scaffold complex, mediating the de novo assembly of an Fe-S cluster and its transfer to target apoproteins. The chain is Cytosolic Fe-S cluster assembly factor Nubp1 homolog from Drosophila yakuba (Fruit fly).